Consider the following 632-residue polypeptide: Eukaryotic peptide chain release factor GTP-binding subunit ERF3B (632 aa).

2 disordered regions span residues 1 to 31 and 162 to 200; these read MDLG…GDGI and SEAK…SIPS. A compositionally biased stretch (basic and acidic residues) spans 178–192; sequence ESVKEVMEEKEEVRK. In terms of domain architecture, tr-type G spans 205-429; it reads KEHVNVVFIG…YLDSLPNFNR (225 aa). The segment at 214 to 221 is G1; the sequence is GHVDAGKS. 217 to 222 is a binding site for GTP; that stretch reads DAGKST. The G2 stretch occupies residues 270 to 274; sequence GKTVE. Residues 291 to 294 are G3; that stretch reads DAPG. Residues 353–356 and 395–397 contribute to the GTP site; these read NKMD and SGL. A G4 region spans residues 353–356; sequence NKMD. Residues 395 to 397 are G5; sequence SGL.

This sequence belongs to the TRAFAC class translation factor GTPase superfamily. Classic translation factor GTPase family. ERF3 subfamily. As to quaternary structure, component of the eRF1-eRF3-GTP ternary complex, composed of ETF1/ERF1 and ERF3 (GSPT1/ERF3A or GSPT2/ERF3B) and GTP. Component of the transient SURF (SMG1-UPF1-eRF1-eRF3) complex. Interacts with UPF1 and PABPC1. As to expression, highly expressed in brain. Moderately expressed in spleen and lung. Weakly expressed in heart, liver and kidney. Expression during the cell-cycle progression is constant.

The protein resides in the cytoplasm. It catalyses the reaction GTP + H2O = GDP + phosphate + H(+). In terms of biological role, GTPase component of the eRF1-eRF3-GTP ternary complex, a ternary complex that mediates translation termination in response to the termination codons UAA, UAG and UGA. GSPT2/ERF3B mediates ETF1/ERF1 delivery to stop codons: The eRF1-eRF3-GTP complex binds to a stop codon in the ribosomal A-site. GTP hydrolysis by GSPT2/ERF3B induces a conformational change that leads to its dissociation, permitting ETF1/ERF1 to accommodate fully in the A-site. Component of the transient SURF complex which recruits UPF1 to stalled ribosomes in the context of nonsense-mediated decay (NMD) of mRNAs containing premature stop codons. The polypeptide is Eukaryotic peptide chain release factor GTP-binding subunit ERF3B (Gspt2) (Mus musculus (Mouse)).